An 82-amino-acid polypeptide reads, in one-letter code: MNNSKDNPFCGAIARKARIYLREGLDCVYFLNKAGQAESCPACTSLVFQGKTCEEHKYNNNLLSWQAVRQLERQMPQLQSSN.

Its function is as follows. Involved in host translation shutoff without degradating host RNA. By suppressing host gene expression, facilitates the evasion from host type I interferon immune response. The protein is Host translation inhibitor 5b of Gallus gallus (Chicken).